The chain runs to 356 residues: Arginine kinase (356 aa).

Ala2 is modified (N-acetylalanine). The region spanning 9–91 is the Phosphagen kinase N-terminal domain; it reads KLEAGFKKLE…FDPIIEDYHV (83 aa). An L-arginine-binding site is contributed by 64 to 68; that stretch reads GVGIY. The 238-residue stretch at 119–356 folds into the Phosphagen kinase C-terminal domain; it reads YVISTRVRCG…LELIKMEKEM (238 aa). Residues 122-126 and His185 contribute to the ATP site; that span reads STRVR. Glu225 lines the L-arginine pocket. Arg229 is a binding site for ATP. Cys271 is an L-arginine binding site. Residues 280 to 284 and 309 to 314 each bind ATP; these read RASVH and RGTRGE. Glu314 provides a ligand contact to L-arginine.

Belongs to the ATP:guanido phosphotransferase family.

It carries out the reaction L-arginine + ATP = N(omega)-phospho-L-arginine + ADP + H(+). This chain is Arginine kinase, found in Penaeus monodon (Giant tiger prawn).